A 420-amino-acid polypeptide reads, in one-letter code: Ribosome biogenesis protein WDR12 homolog (420 aa).

Positions 10–92 are ubiquitin-like (UBL) domain; the sequence is VQVHLKTKQE…EDAIEIEYVE (83 aa). WD repeat units follow at residues 104 to 142, 143 to 185, 192 to 231, 250 to 288, 290 to 329, 335 to 375, and 379 to 417; these read LHDD…LTIS, GHTA…NAVD, GHER…GVEG, GHRE…IKTE, STNK…GSVV, GHNA…APLY, and GHGD…AEDT.

This sequence belongs to the WD repeat WDR12/YTM1 family.

Its subcellular location is the nucleus. It is found in the nucleolus. The protein localises to the nucleoplasm. Required for maturation of ribosomal RNAs and formation of the large ribosomal subunit. This is Ribosome biogenesis protein WDR12 homolog from Drosophila simulans (Fruit fly).